Reading from the N-terminus, the 334-residue chain is N-acetyl-gamma-glutamyl-phosphate reductase (334 aa).

Residue Cys-154 is part of the active site.

Belongs to the NAGSA dehydrogenase family. Type 1 subfamily.

It localises to the cytoplasm. The catalysed reaction is N-acetyl-L-glutamate 5-semialdehyde + phosphate + NADP(+) = N-acetyl-L-glutamyl 5-phosphate + NADPH + H(+). Its pathway is amino-acid biosynthesis; L-arginine biosynthesis; N(2)-acetyl-L-ornithine from L-glutamate: step 3/4. In terms of biological role, catalyzes the NADPH-dependent reduction of N-acetyl-5-glutamyl phosphate to yield N-acetyl-L-glutamate 5-semialdehyde. The protein is N-acetyl-gamma-glutamyl-phosphate reductase of Pectobacterium carotovorum subsp. carotovorum (strain PC1).